The sequence spans 513 residues: Histidine ammonia-lyase (513 aa).

The segment at residues 142-144 (ASG) is a cross-link (5-imidazolinone (Ala-Gly)). 2,3-didehydroalanine (Ser) is present on serine 143.

The protein belongs to the PAL/histidase family. In terms of processing, contains an active site 4-methylidene-imidazol-5-one (MIO), which is formed autocatalytically by cyclization and dehydration of residues Ala-Ser-Gly.

The protein resides in the cytoplasm. It carries out the reaction L-histidine = trans-urocanate + NH4(+). The protein operates within amino-acid degradation; L-histidine degradation into L-glutamate; N-formimidoyl-L-glutamate from L-histidine: step 1/3. In Roseobacter denitrificans (strain ATCC 33942 / OCh 114) (Erythrobacter sp. (strain OCh 114)), this protein is Histidine ammonia-lyase.